Here is a 213-residue protein sequence, read N- to C-terminus: tRNA (guanine-N(7)-)-methyltransferase (213 aa).

Positions 38, 63, 91, and 113 each coordinate S-adenosyl-L-methionine. D113 is an active-site residue. Substrate-binding positions include K117, D149, and 192–195 (TEYE).

This sequence belongs to the class I-like SAM-binding methyltransferase superfamily. TrmB family.

The enzyme catalyses guanosine(46) in tRNA + S-adenosyl-L-methionine = N(7)-methylguanosine(46) in tRNA + S-adenosyl-L-homocysteine. It functions in the pathway tRNA modification; N(7)-methylguanine-tRNA biosynthesis. In terms of biological role, catalyzes the formation of N(7)-methylguanine at position 46 (m7G46) in tRNA. The protein is tRNA (guanine-N(7)-)-methyltransferase of Mycoplasmoides gallisepticum (strain R(low / passage 15 / clone 2)) (Mycoplasma gallisepticum).